The following is a 309-amino-acid chain: MNRIAVIGVGNVGMAFAYAAAIKRLANDIVLIDANAARAEGESMDLADAMALVGPVQIRSGGYEQCEGARIVVVTAGAKQMPGQSRLDLVRVNAGITRDILTAVMQYADDPLYIMATNPVDVLTHVARTVTGVAPGRVIGSGTVLDSARFRGHVAEILGVDVRGVHAHIVGEHGDSEVALWSRANVSGIPVAEMCARRGIAYDAAFREKALGHVRHAAYEIIGRKGATGYGIGMSLCRIVEAILHDEHSVLTVSCPVAGHYGLGDVSLSLPCVIGSDGIEEVLDAPIAEDEQAALAASARVLGEHLAAL.

NAD(+) contacts are provided by residues Val-12, Asp-33, Arg-38, Tyr-63, and 77-78 (GA). Residues Gln-80, Arg-86, and 118-121 (NPVD) each bind substrate. NAD(+) contacts are provided by residues 116–118 (ATN) and Ser-141. 146-149 (DSAR) contacts substrate. 2 residues coordinate beta-D-fructose 1,6-bisphosphate: Arg-151 and His-166. Residue His-173 is the Proton acceptor of the active site. Residue Tyr-219 is modified to Phosphotyrosine. Residue Thr-228 coordinates substrate.

This sequence belongs to the LDH/MDH superfamily. LDH family. In terms of assembly, homotetramer.

The protein localises to the cytoplasm. It carries out the reaction (S)-lactate + NAD(+) = pyruvate + NADH + H(+). Its pathway is fermentation; pyruvate fermentation to lactate; (S)-lactate from pyruvate: step 1/1. With respect to regulation, allosterically activated by fructose 1,6-bisphosphate (FBP). Its function is as follows. Catalyzes the conversion of lactate to pyruvate. This is L-lactate dehydrogenase from Nitratidesulfovibrio vulgaris (strain ATCC 29579 / DSM 644 / CCUG 34227 / NCIMB 8303 / VKM B-1760 / Hildenborough) (Desulfovibrio vulgaris).